Here is a 120-residue protein sequence, read N- to C-terminus: UPF0344 protein lmo2265 (120 aa).

4 helical membrane passes run 3–23 (GYIH…ALLI), 33–53 (MLQM…IMMV), 62–82 (ILAI…EMLL), and 92–112 (GMFL…GFYL).

Belongs to the UPF0344 family.

The protein resides in the cell membrane. In Listeria monocytogenes serovar 1/2a (strain ATCC BAA-679 / EGD-e), this protein is UPF0344 protein lmo2265.